We begin with the raw amino-acid sequence, 133 residues long: Large ribosomal subunit protein uL16 (133 aa).

Belongs to the universal ribosomal protein uL16 family. Part of the 50S ribosomal subunit.

Binds 23S rRNA and is also seen to make contacts with the A and possibly P site tRNAs. The sequence is that of Large ribosomal subunit protein uL16 from Blochmanniella floridana.